The sequence spans 634 residues: MGKVVGIDLGTTNSCVAVMEGGKPTVIANAEGFRTTPSVVAYTKNQDQLVGQIAKRQAVMNPENTFYSAKRFVGRRVDEVNEESKDVSYGIEKAGSNVKLKCPVLDKQFSPEEVSAQVLRKLSEDAGKYLGENITQAVITVPAYFNDSQRQATKDAGKIAGLEVLRIINEPTAAALAYGLDKKSNERILVFDLGGGTFDVSVLEVGDGVFEVLSTSGDTHLGGDDFDRCIVNHLASVFKSNEGIDLREDKQALQRLTEAAEKAKIELSNATQSEINLPFITATPDGPKHLDLNLTRANFEELASKLIDRCRVPVEQALKDAKLSTGEIDEIVMVGGSTRMPAVQELVKRVTGKDPNQTVNPDEVVAVGAAIQGGVLAGEVKDILLLDVTPLSLGVETLGGVMTKMITRNTTVPTKKSETYSTAVDGQTNVEIHVLQGEREMASDNKSLGTFRLDGIPSAPRGVPQIEVTFDIDANGILSVTAKDKGSGKEQSISITGASTLSDNEVDKMVKDAESNASVDKEKREKIDLKNQAETLVYQTEKQLGELGDKVDDSAKAKVEEKSKALKEATSKEDYDSMKKLLEELQQELYAIGSSVYQQPGNQPPAPGGPNANASDDKGPDDDVIDADFTETKD.

Position 197 is a phosphothreonine; by autocatalysis (Thr197). Residues 592-634 form a disordered region; the sequence is IGSSVYQQPGNQPPAPGGPNANASDDKGPDDDVIDADFTETKD. Positions 619–634 are enriched in acidic residues; it reads GPDDDVIDADFTETKD.

It belongs to the heat shock protein 70 family.

Its function is as follows. Acts as a chaperone. The protein is Chaperone protein DnaK of Prochlorococcus marinus (strain MIT 9515).